We begin with the raw amino-acid sequence, 571 residues long: Kinesin light chain (571 aa).

A coiled-coil region spans residues 54–160; the sequence is LLTSMKTIRK…KKHLEFMNEM (107 aa). A compositionally biased stretch (basic and acidic residues) spans 167-177; it reads EAQVNEEKESE. Positions 167 to 210 are disordered; it reads EAQVNEEKESEQSSLDLGFPDDDDDGGQPEVLSPTQPSAMAQAA. TPR repeat units lie at residues 220 to 253, 262 to 295, 304 to 337, 346 to 379, 388 to 421, and 471 to 504; these read LRTLHNLVIQYASQGRYEVAVPLCKQALEDLEKT, ATMLNILALVYRDQGKYKEAANLLNDALGIREKT, AATLNNLAVLYGKRGKYKDAEPLCKRALVIREKV, AKQLNNLALLCQNQGKYEEVERYYQRALEIYQKE, AKTKNNLASAYLKQGKYKQAEILYKEVLTRAHEK, and TTTLKNLGALYRRQGKYEAAETLEECALRSRKSA. Residues 518–571 are disordered; that stretch reads GSDFSKGQSPKDRKRSNSRDRNRRDSMDSVSYEKSGDGDEHEKSKLHVGTSHKQ. Composition is skewed to basic and acidic residues over residues 526–544 and 551–562; these read SPKDRKRSNSRDRNRRDSM and KSGDGDEHEKSK.

It belongs to the kinesin light chain family. Oligomeric complex composed of two heavy chains and two light chains.

It localises to the cytoplasm. Its subcellular location is the cytoskeleton. Kinesin is a microtubule-associated force-producing protein that may play a role in organelle transport. The light chain may function in coupling of cargo to the heavy chain or in the modulation of its ATPase activity. The polypeptide is Kinesin light chain (Doryteuthis pealeii (Longfin inshore squid)).